Here is an 884-residue protein sequence, read N- to C-terminus: Probable ribonuclease ZC3H12C (884 aa).

The tract at residues 66 to 108 (KPTMDTVNSGKEGKGVSEENVSSGDSEGSTSSDHESEQLSSLS) is disordered. Residues 87 to 96 (SSGDSEGSTS) are compositionally biased toward low complexity. S231 carries the phosphoserine modification. An RNase NYN domain is found at 246–401 (LRPVVIDGSN…LGRHGPSLDN (156 aa)). A C3H1-type zinc finger spans residues 411–436 (EHKKQPCPYGKKCTYGHKCKYYHPER). Residues 456–478 (AAKTTNEGGLVKSNSVPCSTKAD) are compositionally biased toward polar residues. Disordered regions lie at residues 456–548 (AAKT…SGVH), 716–739 (VGAR…KAPH), and 755–776 (SRLY…EGLG). Positions 500-516 (VYQDIEEKLPTKNKLET) are enriched in basic and acidic residues. Polar residues predominate over residues 518–543 (SVPSLVSIPATSTAKPQSTTPLSNGL).

It belongs to the ZC3H12 family. The cofactor is Mg(2+).

In terms of biological role, may function as RNase and regulate the levels of target RNA species. The protein is Probable ribonuclease ZC3H12C (Zc3h12c) of Mus musculus (Mouse).